Consider the following 450-residue polypeptide: Phosphoglucosamine mutase (450 aa).

Ser-101 (phosphoserine intermediate) is an active-site residue. Mg(2+) contacts are provided by Ser-101, Asp-242, Asp-244, and Asp-246. Phosphoserine is present on Ser-101.

This sequence belongs to the phosphohexose mutase family. The cofactor is Mg(2+). In terms of processing, activated by phosphorylation.

The enzyme catalyses alpha-D-glucosamine 1-phosphate = D-glucosamine 6-phosphate. Functionally, catalyzes the conversion of glucosamine-6-phosphate to glucosamine-1-phosphate. The protein is Phosphoglucosamine mutase of Rhodopseudomonas palustris (strain HaA2).